Reading from the N-terminus, the 240-residue chain is tRNA (guanine-N(1)-)-methyltransferase (240 aa).

Residues glycine 112 and 132–137 each bind S-adenosyl-L-methionine; that span reads LGDFVL.

Belongs to the RNA methyltransferase TrmD family. As to quaternary structure, homodimer.

It is found in the cytoplasm. The enzyme catalyses guanosine(37) in tRNA + S-adenosyl-L-methionine = N(1)-methylguanosine(37) in tRNA + S-adenosyl-L-homocysteine + H(+). Its function is as follows. Specifically methylates guanosine-37 in various tRNAs. This chain is tRNA (guanine-N(1)-)-methyltransferase, found in Cyanothece sp. (strain PCC 7425 / ATCC 29141).